The chain runs to 349 residues: CCN family member 2 (349 aa).

Positions 1-26 are cleaved as a signal peptide; the sequence is MTAASMGPVRVAFVVLLALCSRPAVG. The region spanning 27–98 is the IGFBP N-terminal domain; it reads QNCSGPCRCP…NRKIGVCTAK (72 aa). N28 is a glycosylation site (N-linked (GlcNAc...) asparagine). 6 disulfides stabilise this stretch: C29/C54, C33/C56, C35/C57, C43/C60, C68/C82, and C74/C95. One can recognise a VWFC domain in the interval 101-167; that stretch reads APCIFGGTVY…GKCCEEWVCD (67 aa). A TSP type-1 domain is found at 198 to 243; sequence NCLVQTTEWSACSKTCGMGISTRVTNDNASCRLEKQSRLCMVRPCE. N-linked (GlcNAc...) asparagine glycosylation is present at N225. The interval 247–349 is heparin-binding; that stretch reads EENIKKGKKC…YYRKMYGDMA (103 aa). Disulfide bonds link C256–C293, C273–C307, C284–C323, C287–C325, and C292–C329. Residues 256-330 form the CTCK domain; the sequence is CIRTPKISKP…KTCACHYNCP (75 aa).

It belongs to the CCN family. Monomer. Interacts with TSKU. Expressed in bone marrow and thymic cells. Also expressed one of two Wilms tumors tested.

The protein localises to the secreted. The protein resides in the extracellular space. It localises to the extracellular matrix. Functionally, major connective tissue mitoattractant secreted by vascular endothelial cells. Promotes proliferation and differentiation of chondrocytes. Is involved in the stimulation of osteoblast differentiation and has a critical role in osteogenesis. Mediates heparin- and divalent cation-dependent cell adhesion in many cell types including fibroblasts, myofibroblasts, endothelial and epithelial cells. Enhances fibroblast growth factor-induced DNA synthesis. The protein is CCN family member 2 of Homo sapiens (Human).